A 259-amino-acid chain; its full sequence is TCF3 fusion partner homolog (259 aa).

Disordered regions lie at residues 50 to 72 and 141 to 210; these read GGLG…GRRR and EDDG…APVQ. At Ser-167 the chain carries Phosphoserine. The segment covering 167 to 178 has biased composition (polar residues); sequence SPSQRTTATLDP. Thr-172 is subject to Phosphothreonine. Phosphoserine is present on residues Ser-180 and Ser-188. The residue at position 203 (Thr-203) is a Phosphothreonine. A Glycyl lysine isopeptide (Lys-Gly) (interchain with G-Cter in SUMO2) cross-link involves residue Lys-222. Phosphoserine is present on Ser-255.

Interacts with NOL3; translocates NOL3 into the nucleus and negatively regulated TFPT-induced cell death. Component of the chromatin remodeling INO80 complex; specifically part of a complex module associated with the N-terminus of INO80.

It is found in the nucleus. Functionally, appears to promote apoptosis in a p53/TP53-independent manner. Putative regulatory component of the chromatin remodeling INO80 complex which is involved in transcriptional regulation, DNA replication and probably DNA repair. The protein is TCF3 fusion partner homolog (Tfpt) of Mus musculus (Mouse).